A 1573-amino-acid chain; its full sequence is Soluble scavenger receptor cysteine-rich domain-containing protein SSC5D (1573 aa).

Residues 1–16 form the signal peptide; sequence MRVLACLLAALVGIQA. An SRCR 1 domain is found at 20–120; sequence LRLADGPHGC…HEEDAGVVCA (101 aa). 3 cysteine pairs are disulfide-bonded: C45–C109, C58–C119, and C89–C99. The segment at 153–192 is disordered; it reads EPLVTHAPRPAGNPQNASRKKSPRPKQAKSTRAPLLTTGA. N168 carries N-linked (GlcNAc...) asparagine glycosylation. The span at 170–181 shows a compositional bias: basic residues; it reads SRKKSPRPKQAK. 2 consecutive SRCR domains span residues 198 to 298 and 304 to 404; these read LRLV…LVCT and LRLA…AVCD. 6 disulfides stabilise this stretch: C223–C287, C236–C297, C267–C277, C329–C393, C342–C403, and C373–C383. 2 N-linked (GlcNAc...) asparagine glycosylation sites follow: N376 and N420. Positions 412 to 465 are disordered; sequence PPTAPTDSNNSTPREAASRPPSTMTSQAPGTAGVSPPPASPTVLWEPGPEAGSP. Polar residues predominate over residues 431-440; that stretch reads PPSTMTSQAP. Positions 467 to 568 constitute an SRCR 4 domain; it reads LRLVAGPSKC…HNEDVGVTCT (102 aa). 3 disulfide bridges follow: C492–C557, C505–C567, and C537–C547. Residues 614–769 are disordered; that stretch reads EKTTTKAPGK…SVSTTGESGL (156 aa). Basic residues predominate over residues 626 to 637; it reads KSTKKWVTKNAK. Positions 654-671 are enriched in polar residues; the sequence is AQSPPDLTSQTTAALTTE. Residues 672–685 show a composition bias toward basic and acidic residues; the sequence is ASRRPTSEFTRRPT. Composition is skewed to polar residues over residues 687 to 702 and 711 to 735; these read EAPQ…TLTP and KTMA…SIPQ. The region spanning 772–872 is the SRCR 5 domain; it reads VRLADGPNRC…HEEDVGLTCT (101 aa). Disulfide bonds link C797-C861, C810-C871, and C841-C851. Disordered regions lie at residues 895-1475 and 1554-1573; these read KGTT…PCVA and MPAP…RGDV. The segment covering 924 to 934 has biased composition (basic and acidic residues); the sequence is RLPDTGSKDGY. 2 stretches are compositionally biased toward pro residues: residues 1004-1020 and 1083-1093; these read PPTP…PPGP and TPEPSPTPLPT. Residues 1101–1140 show a composition bias toward polar residues; that stretch reads DPSTPSEVTSLSPTSEQVPESDTTPDLDTTPYSSTVSEYS. A compositionally biased stretch (pro residues) spans 1144 to 1160; it reads DPSPSPHPTTTPDPTMA. Low complexity-rich tracts occupy residues 1161–1175 and 1185–1277; these read PDPI…TPHF and PHPT…MPHP. The span at 1278 to 1328 shows a compositional bias: pro residues; sequence TTTPHPTTTPHPTTTPHPTTTPHPTMTPDPTTTPYPTTTPDPTTTPHPTTP. 2 stretches are compositionally biased toward polar residues: residues 1335–1354 and 1364–1380; these read VITT…SPTL and PQLT…TSQI. Residues 1381-1401 are compositionally biased toward low complexity; that stretch reads PTLEPSPALESSPSRSSTATS. Pro residues predominate over residues 1464-1475; that stretch reads GQSPGPHGPCVA.

Interacts with LGALS1 and laminin. As to expression, highly expressed in monocytes/macrophages and T-lymphocytes. Highly expressed in placenta and spleen, and also detected at lower levels in colon, and more weakly in lung, heart and kidney.

The protein localises to the secreted. The protein resides in the cytoplasm. In terms of biological role, binds to extracellular matrix proteins. Binds to pathogen-associated molecular patterns (PAMPs) present on the cell walls of Gram-positive and Gram-negative bacteria and fungi, behaving as a pattern recognition receptor (PRR). Induces bacterial and fungal aggregation and subsequent inhibition of PAMP-induced cytokine release. Does not possess intrinsic bactericidal activity. May play a role in the innate defense and homeostasis of certain epithelial surfaces. The chain is Soluble scavenger receptor cysteine-rich domain-containing protein SSC5D (SSC5D) from Homo sapiens (Human).